The sequence spans 446 residues: tRNA modification GTPase MnmE (446 aa).

(6S)-5-formyl-5,6,7,8-tetrahydrofolate contacts are provided by Arg-22, Glu-80, and Lys-119. One can recognise a TrmE-type G domain in the interval 215–370 (GLSLVIAGRP…LKKVIKQVVG (156 aa)). Asn-225 is a K(+) binding site. GTP contacts are provided by residues 225–230 (NAGKST), 244–250 (TEIAGTT), and 269–272 (DTAG). Ser-229 is a Mg(2+) binding site. Thr-244, Ile-246, and Thr-249 together coordinate K(+). Mg(2+) is bound at residue Thr-250. A (6S)-5-formyl-5,6,7,8-tetrahydrofolate-binding site is contributed by Lys-446.

It belongs to the TRAFAC class TrmE-Era-EngA-EngB-Septin-like GTPase superfamily. TrmE GTPase family. As to quaternary structure, homodimer. Heterotetramer of two MnmE and two MnmG subunits. It depends on K(+) as a cofactor.

The protein resides in the cytoplasm. Its function is as follows. Exhibits a very high intrinsic GTPase hydrolysis rate. Involved in the addition of a carboxymethylaminomethyl (cmnm) group at the wobble position (U34) of certain tRNAs, forming tRNA-cmnm(5)s(2)U34. In Legionella pneumophila (strain Paris), this protein is tRNA modification GTPase MnmE.